The following is a 466-amino-acid chain: Coagulation factor IX (466 aa).

The N-terminal stretch at Met-1–Gly-25 is a signal peptide. The propeptide occupies Ala-26 to Arg-46. Residues Tyr-47, Asn-48, Glu-53, Glu-54, Glu-61, Glu-63, Glu-66, Glu-67, Glu-72, Glu-73, and Glu-76 each coordinate Ca(2+). Positions Tyr-47–Val-92 constitute a Gla domain. Residues Glu-53, Glu-54, Glu-61, Glu-63, Glu-66, Glu-67, Glu-72, Glu-73, Glu-76, Glu-79, and Glu-82 each carry the 4-carboxyglutamate modification. Glu-61 contacts Mg(2+). Cysteines 64 and 69 form a disulfide. Residue Glu-66 coordinates Mg(2+). Glu-72 serves as a coordination point for Mg(2+). Glu-76 contacts Mg(2+). Glu-82 serves as a coordination point for Ca(2+). Glu-82 is a binding site for Mg(2+). The O-linked (GalNAc...) threonine glycan is linked to Thr-85. The Ca(2+) site is built by Glu-86, Asp-93, Gly-94, and Gln-96. Glu-86 carries the post-translational modification 4-carboxyglutamate. Residue Glu-86 coordinates Mg(2+). The EGF-like 1; calcium-binding domain occupies Asp-93 to Glu-129. 10 disulfides stabilise this stretch: Cys-97–Cys-108, Cys-102–Cys-117, Cys-119–Cys-128, Cys-134–Cys-145, Cys-141–Cys-155, Cys-157–Cys-170, Cys-178–Cys-340, Cys-257–Cys-273, Cys-387–Cys-401, and Cys-412–Cys-440. An O-linked (Glc...) serine glycan is attached at Ser-99. Ca(2+) is bound by residues Asp-110 and Asp-111. Asp-110 is modified ((3R)-3-hydroxyaspartate). Ser-114 is modified (phosphoserine). Positions Leu-130 to Glu-171 constitute an EGF-like 2 domain. Residues Ala-193–Arg-231 constitute a propeptide, activation peptide. A Sulfotyrosine modification is found at Tyr-202. Residue Ser-205 is modified to Phosphoserine. Position 206 is a phosphothreonine; alternate (Thr-206). The O-linked (GalNAc...) threonine; alternate glycan is linked to Thr-206. Asn-221 is a glycosylation site (N-linked (GlcNAc...) asparagine). O-linked (GalNAc...) threonine glycans are attached at residues Thr-223 and Thr-230. A Peptidase S1 domain is found at Ile-232–Lys-464. Catalysis depends on His-272, which acts as the Charge relay system. Positions 286, 288, 291, 293, and 296 each coordinate Ca(2+). Asp-320 (charge relay system) is an active-site residue. Ser-416 serves as the catalytic Charge relay system.

It belongs to the peptidase S1 family. In terms of assembly, heterodimer of a light chain and a heavy chain; disulfide-linked. Interacts (inactive and activated) with F11 (activated) in calcium-dependent manner. Interacts with SERPINC1. In terms of processing, the iron and 2-oxoglutarate dependent 3-hydroxylation of aspartate and asparagine is (R) stereospecific within EGF domains. Post-translationally, activated by factor XIa, which excises the activation peptide. The propeptide can also be removed by snake venom protease. Activated by coagulation factor VIIa-tissue factor (F7-F3) complex in calcium-dependent manner. Predominantly O-glucosylated at Ser-99 by POGLUT1 in vitro.

The protein localises to the secreted. The catalysed reaction is Selective cleavage of Arg-|-Ile bond in factor X to form factor Xa.. Factor IX is a vitamin K-dependent plasma protein that participates in the intrinsic pathway of blood coagulation by converting factor X to its active form in the presence of Ca(2+) ions, phospholipids, and factor VIIIa. This is Coagulation factor IX (F9) from Felis catus (Cat).